A 479-amino-acid polypeptide reads, in one-letter code: Glycogen synthase (479 aa).

An ADP-alpha-D-glucose-binding site is contributed by Lys16.

This sequence belongs to the glycosyltransferase 1 family. Bacterial/plant glycogen synthase subfamily.

The enzyme catalyses [(1-&gt;4)-alpha-D-glucosyl](n) + ADP-alpha-D-glucose = [(1-&gt;4)-alpha-D-glucosyl](n+1) + ADP + H(+). Its pathway is glycan biosynthesis; glycogen biosynthesis. Functionally, synthesizes alpha-1,4-glucan chains using ADP-glucose. In Lactiplantibacillus plantarum (strain ATCC BAA-793 / NCIMB 8826 / WCFS1) (Lactobacillus plantarum), this protein is Glycogen synthase.